Here is a 355-residue protein sequence, read N- to C-terminus: S-adenosylmethionine:tRNA ribosyltransferase-isomerase (355 aa).

It belongs to the QueA family. Monomer.

It is found in the cytoplasm. It carries out the reaction 7-aminomethyl-7-carbaguanosine(34) in tRNA + S-adenosyl-L-methionine = epoxyqueuosine(34) in tRNA + adenine + L-methionine + 2 H(+). It participates in tRNA modification; tRNA-queuosine biosynthesis. Transfers and isomerizes the ribose moiety from AdoMet to the 7-aminomethyl group of 7-deazaguanine (preQ1-tRNA) to give epoxyqueuosine (oQ-tRNA). This chain is S-adenosylmethionine:tRNA ribosyltransferase-isomerase, found in Burkholderia lata (strain ATCC 17760 / DSM 23089 / LMG 22485 / NCIMB 9086 / R18194 / 383).